The following is a 259-amino-acid chain: AA9 family lytic polysaccharide monooxygenase E (259 aa).

A signal peptide spans 1–20 (MKATVLAGLAAVIAAQGVAG). Residues His21 and His99 each contribute to the Cu(2+) site. A disulfide bridge links Cys69 with Cys193. Positions 179 and 188 each coordinate O2. Tyr190 contacts Cu(2+).

Belongs to the polysaccharide monooxygenase AA9 family. Cu(2+) is required as a cofactor.

Its subcellular location is the secreted. It carries out the reaction [(1-&gt;4)-beta-D-glucosyl]n+m + reduced acceptor + O2 = 4-dehydro-beta-D-glucosyl-[(1-&gt;4)-beta-D-glucosyl]n-1 + [(1-&gt;4)-beta-D-glucosyl]m + acceptor + H2O.. Lytic polysaccharide monooxygenase (LPMO) that depolymerizes crystalline and amorphous polysaccharides via the oxidation of scissile alpha- or beta-(1-4)-glycosidic bonds, yielding C1 or C4 oxidation products. Catalysis by LPMOs requires the reduction of the active-site copper from Cu(II) to Cu(I) by a reducing agent and H(2)O(2) or O(2) as a cosubstrate. The protein is AA9 family lytic polysaccharide monooxygenase E of Malbranchea cinnamomea (Thermophilic fungus).